The following is a 317-amino-acid chain: Melanocyte-stimulating hormone receptor (317 aa).

Residues 1-37 (MPVQGSQRRLLGSLNSTPTATPHLGLAANQTGARCLE) are Extracellular-facing. N-linked (GlcNAc...) asparagine glycosylation occurs at Asn29. The chain crosses the membrane as a helical span at residues 38-63 (VSIPDGLFLSLGLVSLVENVLVVTAI). Topologically, residues 64–72 (AKNRNLHSP) are cytoplasmic. A helical membrane pass occupies residues 73-93 (MYCFICCLALSDLLVSGSNML). The Extracellular segment spans residues 94 to 118 (ETAVILLLEAGALAARAAVVQQLDN). Residues 119–140 (VIDVITCSSMLSSLCFLGAIAV) form a helical membrane-spanning segment. Residues 141–163 (DRYISIFYALRYHSIVTLPRARR) are Cytoplasmic-facing. A helical transmembrane segment spans residues 164–183 (AVAAIWVASVLFSMLFIAYY). Topologically, residues 184–191 (DHAAVLLC) are extracellular. A helical transmembrane segment spans residues 192 to 211 (LVVFFLAMLVLMAVLYVHML). At 212-240 (ARACQHAQGIARLHKRQCPAHQGFGLKGA) the chain is on the cytoplasmic side. The helical transmembrane segment at 241-266 (ATLTILLGIFFLCWGPFFLHLTLIVL) threads the bilayer. Residues 267-279 (CPQHPTCSCIFKN) lie on the Extracellular side of the membrane. Residues 280 to 300 (FNLFLALIICNAIIDPLIYAF) traverse the membrane as a helical segment. Residues 301–317 (RSQELRRTLKEVLLCSW) lie on the Cytoplasmic side of the membrane. Cys315 carries the S-palmitoyl cysteine lipid modification.

It belongs to the G-protein coupled receptor 1 family. Interacts with MGRN1, but does not undergo MGRN1-mediated ubiquitination; this interaction competes with GNAS-binding and thus inhibits agonist-induced cAMP production. Interacts with OPN3; the interaction results in a decrease in MC1R-mediated cAMP signaling and ultimately a decrease in melanin production in melanocytes.

The protein resides in the cell membrane. Functionally, receptor for MSH (alpha, beta and gamma) and ACTH. The activity of this receptor is mediated by G proteins which activate adenylate cyclase. Mediates melanogenesis, the production of eumelanin (black/brown) and phaeomelanin (red/yellow), via regulation of cAMP signaling in melanocytes. The protein is Melanocyte-stimulating hormone receptor (MC1R) of Chlorocebus aethiops (Green monkey).